We begin with the raw amino-acid sequence, 372 residues long: MAEKPLRPLAEGELSIDQVKEQLVELGKKRGVLTYAEITEKLAPYDQDSDQMDEFFEYLGEQGVEILNDNEEVPSLQQVEKEEEEFDLNDLSVPPGVKINDPVRMYLKEIGRVPLLTAEEEIELATRIEQGDEEAKRRLAEANLRLVVSIAKRYVGRGMLFLDLIQEGNMGLIKAVEKFDYNKGFKFSTYATWWIRQAITRAIADQARTIRIPVHMVETINKLIRVQRQLLQDLGREPSPEEVAEEMDLTPEKVREILKIAQEPVSLETPIGEEDDSHLGDFIEDQDALAPSDAAAYELLKEQLEDVLDTLTDREENVLRLRFGLDDGRTRTLEEVGKVFGVTRERIRQIEAKALRKLRHPSRSKRLKDFLE.

The segment at 139–209 (LAEANLRLVV…TRAIADQART (71 aa)) is sigma-70 factor domain-2. Positions 163-166 (DLIQ) match the Interaction with polymerase core subunit RpoC motif. The tract at residues 218–294 (ETINKLIRVQ…DQDALAPSDA (77 aa)) is sigma-70 factor domain-3. The sigma-70 factor domain-4 stretch occupies residues 307 to 360 (VLDTLTDREENVLRLRFGLDDGRTRTLEEVGKVFGVTRERIRQIEAKALRKLRH). Residues 333–352 (LEEVGKVFGVTRERIRQIEA) constitute a DNA-binding region (H-T-H motif).

Belongs to the sigma-70 factor family. RpoD/SigA subfamily. Interacts transiently with the RNA polymerase catalytic core.

It localises to the cytoplasm. Sigma factors are initiation factors that promote the attachment of RNA polymerase to specific initiation sites and are then released. This sigma factor is the primary sigma factor during exponential growth. This chain is RNA polymerase sigma factor SigA, found in Halalkalibacterium halodurans (strain ATCC BAA-125 / DSM 18197 / FERM 7344 / JCM 9153 / C-125) (Bacillus halodurans).